A 184-amino-acid chain; its full sequence is dITP/XTP pyrophosphatase (184 aa).

8–13 (TGNKGK) contacts substrate. Glutamate 37 and aspartate 66 together coordinate Mg(2+). The active-site Proton acceptor is aspartate 66. Residues serine 67, 142–145 (FGYD), lysine 163, and 168–169 (HR) contribute to the substrate site.

This sequence belongs to the HAM1 NTPase family. As to quaternary structure, homodimer. It depends on Mg(2+) as a cofactor.

It carries out the reaction XTP + H2O = XMP + diphosphate + H(+). It catalyses the reaction dITP + H2O = dIMP + diphosphate + H(+). The enzyme catalyses ITP + H2O = IMP + diphosphate + H(+). Its function is as follows. Pyrophosphatase that catalyzes the hydrolysis of nucleoside triphosphates to their monophosphate derivatives, with a high preference for the non-canonical purine nucleotides XTP (xanthosine triphosphate), dITP (deoxyinosine triphosphate) and ITP. Seems to function as a house-cleaning enzyme that removes non-canonical purine nucleotides from the nucleotide pool, thus preventing their incorporation into DNA/RNA and avoiding chromosomal lesions. The sequence is that of dITP/XTP pyrophosphatase from Methanosarcina mazei (strain ATCC BAA-159 / DSM 3647 / Goe1 / Go1 / JCM 11833 / OCM 88) (Methanosarcina frisia).